A 466-amino-acid chain; its full sequence is Light-independent protochlorophyllide reductase subunit N (466 aa).

[4Fe-4S] cluster-binding residues include cysteine 23, cysteine 48, and cysteine 108.

It belongs to the BchN/ChlN family. Protochlorophyllide reductase is composed of three subunits; ChlL, ChlN and ChlB. Forms a heterotetramer of two ChlB and two ChlN subunits. Requires [4Fe-4S] cluster as cofactor.

The catalysed reaction is chlorophyllide a + oxidized 2[4Fe-4S]-[ferredoxin] + 2 ADP + 2 phosphate = protochlorophyllide a + reduced 2[4Fe-4S]-[ferredoxin] + 2 ATP + 2 H2O. It functions in the pathway porphyrin-containing compound metabolism; chlorophyll biosynthesis (light-independent). Functionally, component of the dark-operative protochlorophyllide reductase (DPOR) that uses Mg-ATP and reduced ferredoxin to reduce ring D of protochlorophyllide (Pchlide) to form chlorophyllide a (Chlide). This reaction is light-independent. The NB-protein (ChlN-ChlB) is the catalytic component of the complex. In Synechococcus elongatus (strain ATCC 33912 / PCC 7942 / FACHB-805) (Anacystis nidulans R2), this protein is Light-independent protochlorophyllide reductase subunit N.